The following is a 217-amino-acid chain: Orotidine 5'-phosphate decarboxylase (217 aa).

Residues D14, K36, 64 to 73, S120, 172 to 182, G197, and R198 each bind substrate; these read DFKVADIPST and PGVGAQGGNLS. K66 serves as the catalytic Proton donor.

It belongs to the OMP decarboxylase family. Type 1 subfamily. In terms of assembly, homodimer.

It catalyses the reaction orotidine 5'-phosphate + H(+) = UMP + CO2. It functions in the pathway pyrimidine metabolism; UMP biosynthesis via de novo pathway; UMP from orotate: step 2/2. Its function is as follows. Catalyzes the decarboxylation of orotidine 5'-monophosphate (OMP) to uridine 5'-monophosphate (UMP). This is Orotidine 5'-phosphate decarboxylase from Methanococcus maripaludis (strain C6 / ATCC BAA-1332).